A 146-amino-acid chain; its full sequence is 16.0 kDa heat shock protein, peroxisomal (146 aa).

The 121-residue stretch at 23–143 (WASASATAAM…RPRTRPIAVS (121 aa)) folds into the sHSP domain. Residues 144–146 (SKL) carry the Microbody targeting signal motif.

The protein belongs to the small heat shock protein (HSP20) family. As to quaternary structure, may form oligomeric structures.

The protein resides in the peroxisome. The protein is 16.0 kDa heat shock protein, peroxisomal (HSP16.0) of Oryza sativa subsp. japonica (Rice).